Consider the following 427-residue polypeptide: Serine hydroxymethyltransferase (427 aa).

A (6S)-5,6,7,8-tetrahydrofolate-binding site is contributed by 122–124; that stretch reads GHI. Position 228 is an N6-(pyridoxal phosphate)lysine (K228).

Belongs to the SHMT family. Homodimer. It depends on pyridoxal 5'-phosphate as a cofactor.

The protein resides in the cytoplasm. The protein operates within amino-acid biosynthesis; glycine biosynthesis; glycine from L-serine: step 1/1. Functionally, catalyzes the reversible interconversion of serine and glycine with a modified folate serving as the one-carbon carrier. Also exhibits a pteridine-independent aldolase activity toward beta-hydroxyamino acids, producing glycine and aldehydes, via a retro-aldol mechanism. The chain is Serine hydroxymethyltransferase from Thermococcus onnurineus (strain NA1).